A 358-amino-acid polypeptide reads, in one-letter code: Photosystem II protein D1 2 (358 aa).

3 helical membrane-spanning segments follow: residues Tyr-28–Thr-45, His-117–Leu-132, and Trp-141–Ala-155. His-117 is a binding site for chlorophyll a. Residue Tyr-125 participates in pheophytin a binding. [CaMn4O5] cluster-binding residues include Asp-169 and Glu-188. Residues Phe-196 to Leu-217 traverse the membrane as a helical segment. Position 197 (His-197) interacts with chlorophyll a. A quinone-binding positions include His-214 and Ser-263–Phe-264. His-214 contacts Fe cation. Fe cation is bound at residue His-271. Residues Phe-273 to Met-287 form a helical membrane-spanning segment. [CaMn4O5] cluster contacts are provided by His-331, Glu-332, Asp-341, and Ala-343. Residues Ala-344–Gly-358 constitute a propeptide that is removed on maturation.

It belongs to the reaction center PufL/M/PsbA/D family. In terms of assembly, PSII is composed of 1 copy each of membrane proteins PsbA, PsbB, PsbC, PsbD, PsbE, PsbF, PsbH, PsbI, PsbJ, PsbK, PsbL, PsbM, PsbT, PsbX, PsbY, PsbZ, Psb30/Ycf12, peripheral proteins PsbO, CyanoQ (PsbQ), PsbU, PsbV and a large number of cofactors. It forms dimeric complexes. The D1/D2 heterodimer binds P680, chlorophylls that are the primary electron donor of PSII, and subsequent electron acceptors. It shares a non-heme iron and each subunit binds pheophytin, quinone, additional chlorophylls, carotenoids and lipids. D1 provides most of the ligands for the Mn4-Ca-O5 cluster of the oxygen-evolving complex (OEC). There is also a Cl(-1) ion associated with D1 and D2, which is required for oxygen evolution. The PSII complex binds additional chlorophylls, carotenoids and specific lipids. serves as cofactor. In terms of processing, tyr-160 forms a radical intermediate that is referred to as redox-active TyrZ, YZ or Y-Z. C-terminally processed by CtpA; processing is essential to allow assembly of the oxygen-evolving complex and thus photosynthetic growth.

Its subcellular location is the cellular thylakoid membrane. The catalysed reaction is 2 a plastoquinone + 4 hnu + 2 H2O = 2 a plastoquinol + O2. Functionally, photosystem II (PSII) is a light-driven water:plastoquinone oxidoreductase that uses light energy to abstract electrons from H(2)O, generating O(2) and a proton gradient subsequently used for ATP formation. It consists of a core antenna complex that captures photons, and an electron transfer chain that converts photonic excitation into a charge separation. The D1/D2 (PsbA/PsbD) reaction center heterodimer binds P680, the primary electron donor of PSII as well as several subsequent electron acceptors. This chain is Photosystem II protein D1 2, found in Synechococcus sp. (strain WH7803).